Consider the following 114-residue polypeptide: rRNA-processing protein cgrA (114 aa).

A compositionally biased stretch (polar residues) spans 1-11; that stretch reads MSSAIPTSSVN. The interval 1 to 114 is disordered; sequence MSSAIPTSSV…REKRNKLLHS (114 aa). Over residues 39–93 the composition is skewed to basic and acidic residues; sequence YEKRLEARKRQEAVKEHERELREEKEAERKAQIQKIKDRRAAKEEKERYEKMAEK. Residues 40–101 adopt a coiled-coil conformation; the sequence is EKRLEARKRQ…EKMHRKRVER (62 aa). The span at 94–114 shows a compositional bias: basic residues; the sequence is MHRKRVERLKRREKRNKLLHS.

Belongs to the CGR1 family.

It localises to the nucleus. Its subcellular location is the nucleolus. Functionally, involved in nucleolar integrity and required for processing of the pre-rRNA for the 60S ribosome subunit. The protein is rRNA-processing protein cgrA (cgrA) of Aspergillus fumigatus (strain ATCC MYA-4609 / CBS 101355 / FGSC A1100 / Af293) (Neosartorya fumigata).